The sequence spans 113 residues: Putative pterin-4-alpha-carbinolamine dehydratase (113 aa).

This sequence belongs to the pterin-4-alpha-carbinolamine dehydratase family.

It catalyses the reaction (4aS,6R)-4a-hydroxy-L-erythro-5,6,7,8-tetrahydrobiopterin = (6R)-L-erythro-6,7-dihydrobiopterin + H2O. The chain is Putative pterin-4-alpha-carbinolamine dehydratase from Rickettsia bellii (strain OSU 85-389).